The sequence spans 92 residues: Envelope glycoprotein J (92 aa).

The N-terminal stretch at 1 to 22 (MDRYAVRTWGIVGILGCAAVGA) is a signal peptide. The Extracellular portion of the chain corresponds to 23-49 (APTGPASDTTNATARLPTHPPLIRSGG). A glycan (N-linked (GlcNAc...) asparagine; by host) is linked at asparagine 33. Residues 50–70 (FAVPLIVGGLCLMILGMACLL) form a helical membrane-spanning segment. Residues 71 to 92 (EVLRRLGRELARCCPHAGQFAP) are Cytoplasmic-facing.

This sequence belongs to the alphaherpesvirinae glycoprotein J family.

It localises to the host Golgi apparatus membrane. The protein localises to the host endoplasmic reticulum membrane. Its subcellular location is the host endosome membrane. Its function is as follows. Functions as an activator of viral protein expression and virus production. In turn, promotes cell-to-cell spread as well as syncytia formation. The chain is Envelope glycoprotein J (gJ) from Homo sapiens (Human).